The chain runs to 1090 residues: Pullulanase (1090 aa).

A signal peptide spans 1–19 (MLRYTRNALVLGSLVLLSG). C20 carries N-palmitoyl cysteine lipidation. The S-diacylglycerol cysteine moiety is linked to residue C20. Residue D684 is the Nucleophile of the active site. E713 functions as the Proton donor in the catalytic mechanism.

The protein belongs to the glycosyl hydrolase 13 family. As to quaternary structure, homotrimer.

Its subcellular location is the cell membrane. It carries out the reaction Hydrolysis of (1-&gt;6)-alpha-D-glucosidic linkages in pullulan, amylopectin and glycogen, and in the alpha- and beta-limit dextrins of amylopectin and glycogen.. The sequence is that of Pullulanase (pulA) from Klebsiella pneumoniae.